Here is a 299-residue protein sequence, read N- to C-terminus: Protein sprouty homolog 4 (299 aa).

Methionine 1 is subject to N-acetylmethionine. Disordered regions lie at residues 50-79 (NDYI…PTPA) and 92-127 (FSGR…ASPR). Residues 92-107 (FSGRPSSVSSSSSTSS) show a composition bias toward low complexity. At serine 125 the chain carries Phosphoserine. One can recognise an SPR domain in the interval 166 to 273 (KCKECASPRT…GYDRLRRPGC (108 aa)).

It belongs to the sprouty family. As to quaternary structure, interacts (via C-terminus) with TESK1 (via both C- and N-termini); the interaction inhibits TESK1 kinase activity. Interacts with RAF1. Interacts with CAV1 (via C-terminus).

It localises to the cytoplasm. Its subcellular location is the cell projection. The protein localises to the ruffle membrane. Its function is as follows. Suppresses the insulin receptor and EGFR-transduced MAPK signaling pathway, but does not inhibit MAPK activation by a constitutively active mutant Ras. Probably impairs the formation of GTP-Ras. Inhibits Ras-independent, but not Ras-dependent, activation of RAF1. Represses integrin-mediated cell spreading via inhibition of TESK1-mediated phosphorylation of cofilin. The sequence is that of Protein sprouty homolog 4 (SPRY4) from Bos taurus (Bovine).